The following is an 82-amino-acid chain: Small ribosomal subunit protein bS16 (82 aa).

The protein belongs to the bacterial ribosomal protein bS16 family.

The sequence is that of Small ribosomal subunit protein bS16 from Erwinia tasmaniensis (strain DSM 17950 / CFBP 7177 / CIP 109463 / NCPPB 4357 / Et1/99).